The primary structure comprises 704 residues: MAQDVLTDLNKVRNIGIMAHIDAGKTTTTERILYYTGITHKIGEVHDGAATMDWMAQEQERGITITSAATTCFWNKNQINIIDTPGHVDFTVEVERSLRVLDGAVAVFDGKEGVEPQSETVWRQADKYDVPRICFVNKMDKLGADFYFTVDTIINRLGAKPLVIQLPIGSEGGFEGVIDLVEMRALTWRGDSKGDVELGAKYDIEEIPADLQDKADEYRAKLLETVAETDDSLLEKYFGGEELTVAEIKAAIRKLTVNSEIYPVLCGSAFKNRGVQPMLDAVIDYLPSPLDVPPMEGHDVRDEEKIIIRKPDSTEPFSALAFKVAVHPFFGRLTYVRVYSGTIASGSQVINSTKGKKERIGKIFQMHSNKENPVDSVTAGHIYAVIGLKDTTTGDTLCDPQDQIVLESMTFPEPVIEVAIEPKTKADQEKLGVAIQKLAEEDPTFRTEQNQETGQTVIKGMGELHLDILVDRMKREFNVEANVGKPQVAYRETIRGTVDKHDFTHKKQTGGSGQFAKIQIKIEPMEVTAEKTYEFDNKVTGGRVPREYIPSVDAGIQDALQVGILAGYPMVGVKATLLDGAAHDVDSSEMAFKIAGSMAFKEAARKAKPVLLEPLMAVEVRTPEEYMGDVIGDLNSRRGQIQAMEDASGVKVITANVPLSEMFGYVGDLRSKTSGRAVYSMSFGSYAEVPKAVADEIVQKNKGE.

Positions 10–290 (NKVRNIGIMA…AVIDYLPSPL (281 aa)) constitute a tr-type G domain. Residues 19–26 (AHIDAGKT), 83–87 (DTPGH), and 137–140 (NKMD) contribute to the GTP site.

It belongs to the TRAFAC class translation factor GTPase superfamily. Classic translation factor GTPase family. EF-G/EF-2 subfamily.

The protein localises to the cytoplasm. Catalyzes the GTP-dependent ribosomal translocation step during translation elongation. During this step, the ribosome changes from the pre-translocational (PRE) to the post-translocational (POST) state as the newly formed A-site-bound peptidyl-tRNA and P-site-bound deacylated tRNA move to the P and E sites, respectively. Catalyzes the coordinated movement of the two tRNA molecules, the mRNA and conformational changes in the ribosome. This Clavibacter michiganensis subsp. michiganensis (strain NCPPB 382) protein is Elongation factor G.